We begin with the raw amino-acid sequence, 303 residues long: N-acetyl-D-glucosamine kinase (303 aa).

Residues 4-11 (GFDIGGTK) and 133-140 (GVGGGLIF) each bind ATP. 4 residues coordinate Zn(2+): His-157, Cys-177, Cys-179, and Cys-184.

It belongs to the ROK (NagC/XylR) family. NagK subfamily.

It carries out the reaction N-acetyl-D-glucosamine + ATP = N-acetyl-D-glucosamine 6-phosphate + ADP + H(+). The protein operates within cell wall biogenesis; peptidoglycan recycling. Functionally, catalyzes the phosphorylation of N-acetyl-D-glucosamine (GlcNAc) derived from cell-wall degradation, yielding GlcNAc-6-P. The sequence is that of N-acetyl-D-glucosamine kinase from Shigella boydii serotype 4 (strain Sb227).